The primary structure comprises 498 residues: MRFNPTTSGPAVSTLDEKNLGRIAQIIGPVLDVVFPPGKMPNIYNALVVKGRDTVGQQINVTCEVQQLLGNNRVRAVAMSATDGLTRGMEVIDTGAPLSVPVGGATLGRIFNVLGEPVDNLGPVDTRTTSPIHRSAPAFIQLDTKLSIFETGIKVVDLLAPYRRGGKIGLFGGAGVGKTVLIMELINNIAKAHGGVSVFGGVGERTREGNDLYMEMKESGVINEKNIAESKVALVYGQMNEPPGARMRVGLTALTMAEYFRDVNEQDVLLFIDNIFRFVQAGSEVSALLGRMPSAVGYQPTLSTEMGSLQERITSTKEGSITSIQAVYVPADDLTDPAPATTFAHLDATTVLSRGLAAKGIYPAVDPLDSTSTMLQPGIVGEEHYETAQKVKQTLQRYKELQDIIAILGLDELSEEDRLTVARARKIERFLSQPFFVAEVFTGSPGKYVGLAETVRGFQLILSGELDSLPEQAFYLVGNIDEATAKAMNLERGGNLKK.

172-179 provides a ligand contact to ATP; the sequence is GGAGVGKT.

Belongs to the ATPase alpha/beta chains family. As to quaternary structure, F-type ATPases have 2 components, CF(1) - the catalytic core - and CF(0) - the membrane proton channel. CF(1) has five subunits: alpha(3), beta(3), gamma(1), delta(1), epsilon(1). CF(0) has four main subunits: a(1), b(1), b'(1) and c(9-12).

It localises to the plastid. Its subcellular location is the chloroplast thylakoid membrane. The catalysed reaction is ATP + H2O + 4 H(+)(in) = ADP + phosphate + 5 H(+)(out). Produces ATP from ADP in the presence of a proton gradient across the membrane. The catalytic sites are hosted primarily by the beta subunits. This chain is ATP synthase subunit beta, chloroplastic, found in Aspidistra elatior (Cast-iron plant).